Reading from the N-terminus, the 124-residue chain is Fluoride-specific ion channel FluC (124 aa).

The next 4 helical transmembrane spans lie at 4 to 24, 35 to 55, 62 to 82, and 95 to 115; these read VLFV…ISLL, FGTL…FALG, PEIK…FSTF, and LVKA…VVYL. Residues glycine 74 and threonine 77 each coordinate Na(+).

The protein belongs to the fluoride channel Fluc/FEX (TC 1.A.43) family.

The protein localises to the cell inner membrane. The enzyme catalyses fluoride(in) = fluoride(out). Na(+) is not transported, but it plays an essential structural role and its presence is essential for fluoride channel function. In terms of biological role, fluoride-specific ion channel. Important for reducing fluoride concentration in the cell, thus reducing its toxicity. This is Fluoride-specific ion channel FluC from Shewanella halifaxensis (strain HAW-EB4).